The primary structure comprises 138 residues: Superoxide dismutase [Mn] (138 aa).

Mn(2+) contacts are provided by histidine 2, histidine 49, aspartate 133, and histidine 137.

The protein belongs to the iron/manganese superoxide dismutase family. Requires Mn(2+) as cofactor.

The catalysed reaction is 2 superoxide + 2 H(+) = H2O2 + O2. In terms of biological role, destroys superoxide anion radicals which are normally produced within the cells and which are toxic to biological systems. The protein is Superoxide dismutase [Mn] (sodA) of Mycolicibacterium phlei (Mycobacterium phlei).